We begin with the raw amino-acid sequence, 80 residues long: Cell division activator CedA (80 aa).

The protein belongs to the CedA family.

Activates the cell division inhibited by chromosomal DNA over-replication. This is Cell division activator CedA from Citrobacter koseri (strain ATCC BAA-895 / CDC 4225-83 / SGSC4696).